The primary structure comprises 387 residues: MSTFFSDTAWICLAVPTVLCGTVFCKYKKSSGQLWSWMVCLAGLCAVCLLILSPFWGLILFSVSCFLMYTYLSGQELLPVDQKAVLVTGGDCGLGHALCKYLDELGFTVFAGVLNENGPGAEELRRTCSPRLSVLQMDITKPVQIKDAYSKVAAMLQDRGLWAVINNAGVLGFPTDGELLLMTDYKQCMAVNFFGTVEVTKTFLPLLRKSKGRLVNVSSMGGGAPMERLASYGSSKAAVTMFSSVMRLELSKWGIKVASIQPGGFLTNIAGTSDKWEKLEKDILDHLPAEVQEDYGQDYILAQRNFLLLINSLASKDFSPVLRDIQHAILAKSPFAYYTPGKGAYLWICLAHYLPIGIYDYFAKRHFGQDKPMPRALRMPNYKKKAT.

The chain crosses the membrane as a helical; Signal-anchor for type II membrane protein span at residues 4–24 (FFSDTAWICLAVPTVLCGTVF). Position 82–111 (82–111 (QKAVLVTGGDCGLGHALCKYLDELGFTVFA)) interacts with NAD(+). Serine 219 provides a ligand contact to substrate. Tyrosine 232 is an active-site residue.

Belongs to the short-chain dehydrogenases/reductases (SDR) family. Homodimer. In terms of tissue distribution, expressed in placenta.

Its subcellular location is the endoplasmic reticulum membrane. The enzyme catalyses 17beta-estradiol + NAD(+) = estrone + NADH + H(+). It catalyses the reaction testosterone + NAD(+) = androst-4-ene-3,17-dione + NADH + H(+). The catalysed reaction is 17beta-hydroxy-5alpha-androstan-3-one + NAD(+) = 5alpha-androstan-3,17-dione + NADH + H(+). It carries out the reaction (20S)-hydroxypregn-4-en-3-one + NAD(+) = progesterone + NADH + H(+). In terms of biological role, catalyzes the NAD-dependent oxidation of the highly active 17beta-hydroxysteroids, such as estradiol (E2), testosterone (T), and dihydrotestosterone (DHT), to their less active forms and thus regulates the biological potency of these steroids. Oxidizes estradiol to estrone, testosterone to androstenedione, and dihydrotestosterone to 5alpha-androstan-3,17-dione. Also has 20-alpha-HSD activity. The chain is 17-beta-hydroxysteroid dehydrogenase type 2 from Homo sapiens (Human).